The following is a 157-amino-acid chain: 2-C-methyl-D-erythritol 2,4-cyclodiphosphate synthase (157 aa).

2 residues coordinate a divalent metal cation: D8 and H10. Residues 8 to 10 (DVH) and 34 to 35 (HS) each bind 4-CDP-2-C-methyl-D-erythritol 2-phosphate. Residue H42 coordinates a divalent metal cation. Residues 56 to 58 (DIG), 61 to 65 (FPDTD), 100 to 106 (AQAPKMA), 132 to 135 (TTTE), F139, and R142 each bind 4-CDP-2-C-methyl-D-erythritol 2-phosphate.

Belongs to the IspF family. Homotrimer. The cofactor is a divalent metal cation.

The enzyme catalyses 4-CDP-2-C-methyl-D-erythritol 2-phosphate = 2-C-methyl-D-erythritol 2,4-cyclic diphosphate + CMP. It functions in the pathway isoprenoid biosynthesis; isopentenyl diphosphate biosynthesis via DXP pathway; isopentenyl diphosphate from 1-deoxy-D-xylulose 5-phosphate: step 4/6. Functionally, involved in the biosynthesis of isopentenyl diphosphate (IPP) and dimethylallyl diphosphate (DMAPP), two major building blocks of isoprenoid compounds. Catalyzes the conversion of 4-diphosphocytidyl-2-C-methyl-D-erythritol 2-phosphate (CDP-ME2P) to 2-C-methyl-D-erythritol 2,4-cyclodiphosphate (ME-CPP) with a corresponding release of cytidine 5-monophosphate (CMP). The chain is 2-C-methyl-D-erythritol 2,4-cyclodiphosphate synthase from Edwardsiella ictaluri (strain 93-146).